The primary structure comprises 107 residues: Ferredoxin Fdx8 (107 aa).

4Fe-4S ferredoxin-type domains lie at 1 to 31 (MAYV…GPLA) and 50 to 79 (LQLY…DEDE). Residues C9, C13, C17, C21, C59, C62, C65, and C69 each coordinate [4Fe-4S] cluster.

[4Fe-4S] cluster serves as cofactor.

Ferredoxins are iron-sulfur proteins that transfer electrons in a wide variety of metabolic reactions. Fdx2 can receive electrons from both FdR_A and FdR_B ferredoxin reductases, with a preference for FdR_B compared with FdR_A, and transfer the electrons to the cytochrome P450 CYP260A1. The sequence is that of Ferredoxin Fdx8 from Sorangium cellulosum (strain So ce56) (Polyangium cellulosum (strain So ce56)).